The following is a 224-amino-acid chain: uncharacterized protein (224 aa).

The first 30 residues, 1-30, serve as a signal peptide directing secretion; the sequence is MSRSSSSMATVLVVLMVVSAGGLSPPCAAA. N-linked (GlcNAc...) asparagine glycosylation occurs at Asn-141.

It is found in the secreted. This is an uncharacterized protein from Oryza sativa subsp. japonica (Rice).